Consider the following 439-residue polypeptide: Putative FBD-associated F-box protein At1g05080 (439 aa).

An F-box domain is found at 12-58; that stretch reads EDRISVLPEDLLVVILDLLPTKDVVATMILSKRWLSIWTMVRTLEYT. The region spanning 360 to 410 is the FBD domain; that stretch reads SWKQPSHVPECLSSQLEIFEWRDYGDRIIEEEFLTYVLANSKRLKTATISL.

The chain is Putative FBD-associated F-box protein At1g05080 from Arabidopsis thaliana (Mouse-ear cress).